A 210-amino-acid polypeptide reads, in one-letter code: Protein GrpE (210 aa).

The interval 191 to 210 (KGGPKPAEAETNSVFDEKDA) is disordered.

This sequence belongs to the GrpE family. As to quaternary structure, homodimer.

It localises to the cytoplasm. In terms of biological role, participates actively in the response to hyperosmotic and heat shock by preventing the aggregation of stress-denatured proteins, in association with DnaK and GrpE. It is the nucleotide exchange factor for DnaK and may function as a thermosensor. Unfolded proteins bind initially to DnaJ; upon interaction with the DnaJ-bound protein, DnaK hydrolyzes its bound ATP, resulting in the formation of a stable complex. GrpE releases ADP from DnaK; ATP binding to DnaK triggers the release of the substrate protein, thus completing the reaction cycle. Several rounds of ATP-dependent interactions between DnaJ, DnaK and GrpE are required for fully efficient folding. The polypeptide is Protein GrpE (Rhizobium etli (strain CIAT 652)).